The chain runs to 219 residues: 7-carboxy-7-deazaguanine synthase (219 aa).

Residues isoleucine 22 to glycine 24 and arginine 37 each bind substrate. The region spanning leucine 28–lysine 219 is the Radical SAM core domain. The [4Fe-4S] cluster site is built by cysteine 41, cysteine 45, and cysteine 48. Position 81 (threonine 81) interacts with substrate. Residues glycine 83 and serine 130–lysine 132 contribute to the S-adenosyl-L-methionine site.

The protein belongs to the radical SAM superfamily. 7-carboxy-7-deazaguanine synthase family. As to quaternary structure, homodimer. Requires [4Fe-4S] cluster as cofactor. S-adenosyl-L-methionine is required as a cofactor. It depends on Mg(2+) as a cofactor.

The enzyme catalyses 6-carboxy-5,6,7,8-tetrahydropterin + H(+) = 7-carboxy-7-deazaguanine + NH4(+). Its pathway is purine metabolism; 7-cyano-7-deazaguanine biosynthesis. In terms of biological role, catalyzes the complex heterocyclic radical-mediated conversion of 6-carboxy-5,6,7,8-tetrahydropterin (CPH4) to 7-carboxy-7-deazaguanine (CDG), a step common to the biosynthetic pathways of all 7-deazapurine-containing compounds. The sequence is that of 7-carboxy-7-deazaguanine synthase from Aquifex aeolicus (strain VF5).